An 89-amino-acid polypeptide reads, in one-letter code: Small ribosomal subunit protein uS17 (89 aa).

It belongs to the universal ribosomal protein uS17 family. In terms of assembly, part of the 30S ribosomal subunit.

Functionally, one of the primary rRNA binding proteins, it binds specifically to the 5'-end of 16S ribosomal RNA. The chain is Small ribosomal subunit protein uS17 from Aromatoleum aromaticum (strain DSM 19018 / LMG 30748 / EbN1) (Azoarcus sp. (strain EbN1)).